We begin with the raw amino-acid sequence, 350 residues long: Transmembrane protein 185B (350 aa).

Helical transmembrane passes span 16–36, 41–61, 81–101, 111–131, 168–188, 211–231, and 240–260; these read LIYACLLLFSVLLPLRLDGII, WAVFAPIWLWKLLVIVGASVG, FKAMLIAVGIHLLLLMFEILV, FWLLVFMPLFFVSPVSVAACV, WLVVFVPLWILMSFLCLVVLY, VTMAISWITIVVPLLIFEVLL, and TFSYISIFIPLWLSLLTLMAT.

This sequence belongs to the TMEM185 family.

It localises to the membrane. This Mus musculus (Mouse) protein is Transmembrane protein 185B (Tmem185b).